Here is a 424-residue protein sequence, read N- to C-terminus: 3-isopropylmalate dehydratase large subunit 1 (424 aa).

The [4Fe-4S] cluster site is built by Cys303, Cys363, and Cys366.

Belongs to the aconitase/IPM isomerase family. LeuC type 2 subfamily. As to quaternary structure, heterodimer of LeuC and LeuD. It depends on [4Fe-4S] cluster as a cofactor.

It catalyses the reaction (2R,3S)-3-isopropylmalate = (2S)-2-isopropylmalate. Its pathway is amino-acid biosynthesis; L-leucine biosynthesis; L-leucine from 3-methyl-2-oxobutanoate: step 2/4. Catalyzes the isomerization between 2-isopropylmalate and 3-isopropylmalate, via the formation of 2-isopropylmaleate. The chain is 3-isopropylmalate dehydratase large subunit 1 from Pyrococcus furiosus (strain ATCC 43587 / DSM 3638 / JCM 8422 / Vc1).